A 362-amino-acid chain; its full sequence is MSHNTFGHLFRVTTWGESHGAALGCVIDGCPPGIIFTLAEIQAYLDKRRPGQSKYTTQRQEQDQVELLSGAITQEDGTTFVTTGTPISLLIRNTDQRSQDYGKIAHQYRPGHADYTYDVKYGIRDFRGGGRASARETAARVAAGALARKVVPHLVVRGAVIAIGPHHINRDRWDWSEVENNPFFTADAEMVQIFSDYIRKIRKDGTSVGAVIEIVAENVPAGLGAPIYAKLDQDIASLLMSINAVKGVEIGDGFAAARLRGEENADEMRMGNDGKPLFLSNHAGGILGGISSGQPIIARFAVKPTSSILTPRRSIDVDGHDVDVITKGRHDPCVGIRAVPVGEAMVACALADHYLRHRGQVG.

Position 48 (Arg48) interacts with NADP(+). Residues 131-133 (RAS), 243-244 (NA), Gly288, 303-307 (KPTSS), and Arg329 each bind FMN.

The protein belongs to the chorismate synthase family. Homotetramer. The cofactor is FMNH2.

It catalyses the reaction 5-O-(1-carboxyvinyl)-3-phosphoshikimate = chorismate + phosphate. It functions in the pathway metabolic intermediate biosynthesis; chorismate biosynthesis; chorismate from D-erythrose 4-phosphate and phosphoenolpyruvate: step 7/7. Catalyzes the anti-1,4-elimination of the C-3 phosphate and the C-6 proR hydrogen from 5-enolpyruvylshikimate-3-phosphate (EPSP) to yield chorismate, which is the branch point compound that serves as the starting substrate for the three terminal pathways of aromatic amino acid biosynthesis. This reaction introduces a second double bond into the aromatic ring system. This is Chorismate synthase from Bartonella tribocorum (strain CIP 105476 / IBS 506).